A 495-amino-acid polypeptide reads, in one-letter code: Glycerol kinase (495 aa).

Thr11 lines the ADP pocket. 3 residues coordinate ATP: Thr11, Thr12, and Ser13. Thr11 contacts sn-glycerol 3-phosphate. Arg15 provides a ligand contact to ADP. Sn-glycerol 3-phosphate contacts are provided by Arg81, Glu82, Tyr133, and Asp242. Glycerol contacts are provided by Arg81, Glu82, Tyr133, Asp242, and Gln243. ADP contacts are provided by Thr264 and Gly307. 4 residues coordinate ATP: Thr264, Gly307, Gln311, and Gly410. Gly410 contributes to the ADP binding site.

This sequence belongs to the FGGY kinase family.

It catalyses the reaction glycerol + ATP = sn-glycerol 3-phosphate + ADP + H(+). Its pathway is polyol metabolism; glycerol degradation via glycerol kinase pathway; sn-glycerol 3-phosphate from glycerol: step 1/1. Inhibited by fructose 1,6-bisphosphate (FBP). In terms of biological role, key enzyme in the regulation of glycerol uptake and metabolism. Catalyzes the phosphorylation of glycerol to yield sn-glycerol 3-phosphate. The sequence is that of Glycerol kinase from Roseobacter denitrificans (strain ATCC 33942 / OCh 114) (Erythrobacter sp. (strain OCh 114)).